Reading from the N-terminus, the 66-residue chain is Beta-toxin ChFII.7 (66 aa).

The region spanning 1–66 (KEGYLVNHST…VWPLPKKTCN (66 aa)) is the LCN-type CS-alpha/beta domain. Intrachain disulfides connect C12–C65, C16–C41, C25–C46, and C29–C48. An Asparagine amide modification is found at N66.

As to expression, expressed by the venom gland.

It localises to the secreted. Beta toxins bind voltage independently at site-4 of sodium channels (Nav) and shift the activation voltage toward more negative potentials, thereby affecting sodium channel activation CC and promoting spontaneous and repetitive firing. This Centruroides hirsutipalpus (Scorpion) protein is Beta-toxin ChFII.7.